Here is a 263-residue protein sequence, read N- to C-terminus: tRNA dimethylallyltransferase (263 aa).

Belongs to the IPP transferase family. As to quaternary structure, monomer. It depends on Mg(2+) as a cofactor.

The catalysed reaction is adenosine(37) in tRNA + dimethylallyl diphosphate = N(6)-dimethylallyladenosine(37) in tRNA + diphosphate. Its function is as follows. Catalyzes the transfer of a dimethylallyl group onto the adenine at position 37 in tRNAs that read codons beginning with uridine, leading to the formation of N6-(dimethylallyl)adenosine (i(6)A). This chain is tRNA dimethylallyltransferase, found in Leifsonia xyli subsp. xyli (strain CTCB07).